The chain runs to 50 residues: Insulin-1 (50 aa).

Intrachain disulfides connect Cys-7–Cys-36, Cys-19–Cys-49, and Cys-35–Cys-40.

The protein belongs to the insulin family. In terms of assembly, heterodimer of a B chain and an A chain linked by two disulfide bonds.

It is found in the secreted. Insulin decreases blood glucose concentration. It increases cell permeability to monosaccharides, amino acids and fatty acids. It accelerates glycolysis, the pentose phosphate cycle, and glycogen synthesis in liver. In Katsuwonus pelamis (Skipjack tuna), this protein is Insulin-1.